The sequence spans 105 residues: Large ribosomal subunit protein uL24 (105 aa).

The protein belongs to the universal ribosomal protein uL24 family. Part of the 50S ribosomal subunit.

Its function is as follows. One of two assembly initiator proteins, it binds directly to the 5'-end of the 23S rRNA, where it nucleates assembly of the 50S subunit. In terms of biological role, one of the proteins that surrounds the polypeptide exit tunnel on the outside of the subunit. The protein is Large ribosomal subunit protein uL24 of Cellvibrio japonicus (strain Ueda107) (Pseudomonas fluorescens subsp. cellulosa).